A 4700-amino-acid chain; its full sequence is StAR-related lipid transfer protein 9 (4700 aa).

Residues 3-384 (NVQVAVRVRP…LRYASSAKNI (382 aa)) form the Kinesin motor domain. Position 103–110 (103–110 (GQTGSGKT)) interacts with ATP. Over residues 310-328 (GDSGILSSPSGTSSGGAPS) the composition is skewed to low complexity. The segment at 310–331 (GDSGILSSPSGTSSGGAPSRRQ) is disordered. The 72-residue stretch at 498–569 (LKEGTTKIGR…LTQGAVITLG (72 aa)) folds into the FHA domain. Composition is skewed to basic and acidic residues over residues 631–646 (QCDE…ETSH) and 867–877 (TSEKTSSEEHL). 4 disordered regions span residues 631–652 (QCDE…QIQQ), 851–880 (WDPS…LPQA), 1057–1104 (KKSS…SDTD), and 1128–1188 (ERKW…GFTA). Over residues 1134–1146 (PEPENSESDDSQL) the composition is skewed to acidic residues. Phosphoserine is present on S1203. Disordered regions lie at residues 1939–1976 (MPGE…EGKN), 2014–2043 (ERNP…RVNN), 2088–2179 (DQKE…PARD), 2254–2290 (ESQV…QEEN), 2377–2403 (GVEH…SSEA), 2416–2444 (MGSH…SPQD), 2479–2539 (LNKV…PRLL), 2589–2613 (RVAG…EGEA), 2642–2678 (LSAD…RKRR), 2696–2731 (SSSS…PVEE), 2765–2789 (PQET…PRTL), 2821–2852 (VQNS…ASPK), 2892–2955 (SKHS…PCRQ), 3124–3144 (NAQV…PHTL), 3199–3241 (HTCS…GLDG), 3274–3412 (SLRQ…MPST), 3564–3611 (IALG…KGSA), 3766–3790 (SDTS…AEET), 3830–3884 (LPSV…RVQK), 3906–3991 (ASTQ…SPKL), 4033–4086 (PEKV…QHLS), and 4153–4193 (PGGL…EWSK). Residues 2088–2100 (DQKEQEKTDHAFR) are compositionally biased toward basic and acidic residues. A compositionally biased stretch (polar residues) spans 2103 to 2118 (SSGNPLPSKDQPSSPR). Residues 2119 to 2129 (QTDDTVFRDSE) are compositionally biased toward basic and acidic residues. Residues 2137–2148 (SIGNHPQVQKIT) are compositionally biased toward polar residues. Residues 2153–2169 (RSREGVRESEPVREHTH) show a composition bias toward basic and acidic residues. Residues 2254–2266 (ESQVAEHVSSSNQ) are compositionally biased toward polar residues. Composition is skewed to basic and acidic residues over residues 2267–2279 (EEPK…EEMP) and 2379–2391 (EHQD…RSHS). A compositionally biased stretch (basic and acidic residues) spans 2500-2510 (QASKPRQKAEK). A compositionally biased stretch (polar residues) spans 2642–2653 (LSADSFESLPNT). The segment covering 2712 to 2729 (PSSADPLAPDSPRSSAPV) has biased composition (low complexity). A compositionally biased stretch (basic and acidic residues) spans 2916 to 2925 (APCRHPREAL). Positions 3124 to 3141 (NAQVCQTNPEPPATTQGP) are enriched in polar residues. Composition is skewed to polar residues over residues 3274–3285 (SLRQNETPQPAA), 3320–3339 (SSPT…QELN), and 3368–3387 (SGKS…QKAS). The segment covering 3388–3397 (SRLDDGTTDH) has biased composition (basic and acidic residues). Over residues 3857–3872 (SSPSPSSPHSPGLFPS) the composition is skewed to low complexity. Residues 3906–3924 (ASTQEPGLSPGSLTLSAPS) are compositionally biased toward polar residues. The span at 3958-3975 (LGGSQRGRSSLQRSNGRS) shows a compositional bias: low complexity. A compositionally biased stretch (polar residues) spans 4048–4065 (EPSQWQSRTENGGESSAS). Residues 4334–4387 (SDIELMLQDYQQAHEEAKVEIARARDQLRERTEQEKLRIHQKIISQLLKEEDKL) are a coiled coil. Residues 4397-4411 (CTSSNGSLSSGMTSG) are compositionally biased toward low complexity. Positions 4397-4419 (CTSSNGSLSSGMTSGYNSSPALS) are disordered. Residues 4483-4700 (SYQDLAKHVV…IARLASFLGR (218 aa)) enclose the START domain.

The protein belongs to the TRAFAC class myosin-kinesin ATPase superfamily. Kinesin family. In terms of assembly, interacts with ATAD3A. In terms of tissue distribution, expressed in the central nervous system, muscle cells (heart and skeletal muscle), pancreas, prostate and lung.

It is found in the cytoplasm. The protein resides in the cytoskeleton. The protein localises to the microtubule organizing center. Its subcellular location is the centrosome. It localises to the centriole. It is found in the nucleus. Its function is as follows. Microtubule-dependent motor protein required for spindle pole assembly during mitosis. Required to stabilize the pericentriolar material (PCM). The polypeptide is StAR-related lipid transfer protein 9 (STARD9) (Homo sapiens (Human)).